Reading from the N-terminus, the 142-residue chain is Transcriptional regulator MraZ (142 aa).

SpoVT-AbrB domains are found at residues 5-51 (SSAL…PRPE) and 77-120 (AQDV…DAAS).

It belongs to the MraZ family. As to quaternary structure, forms oligomers.

It localises to the cytoplasm. Its subcellular location is the nucleoid. This Bordetella bronchiseptica (strain ATCC BAA-588 / NCTC 13252 / RB50) (Alcaligenes bronchisepticus) protein is Transcriptional regulator MraZ.